Consider the following 315-residue polypeptide: Acetyl-coenzyme A carboxylase carboxyl transferase subunit alpha (315 aa).

The region spanning 32–289 is the CoA carboxyltransferase C-terminal domain; it reads EIDLLEASLE…KQAFVDQLEQ (258 aa).

Belongs to the AccA family. As to quaternary structure, acetyl-CoA carboxylase is a heterohexamer composed of biotin carboxyl carrier protein (AccB), biotin carboxylase (AccC) and two subunits each of ACCase subunit alpha (AccA) and ACCase subunit beta (AccD).

The protein localises to the cytoplasm. The catalysed reaction is N(6)-carboxybiotinyl-L-lysyl-[protein] + acetyl-CoA = N(6)-biotinyl-L-lysyl-[protein] + malonyl-CoA. It functions in the pathway lipid metabolism; malonyl-CoA biosynthesis; malonyl-CoA from acetyl-CoA: step 1/1. In terms of biological role, component of the acetyl coenzyme A carboxylase (ACC) complex. First, biotin carboxylase catalyzes the carboxylation of biotin on its carrier protein (BCCP) and then the CO(2) group is transferred by the carboxyltransferase to acetyl-CoA to form malonyl-CoA. The polypeptide is Acetyl-coenzyme A carboxylase carboxyl transferase subunit alpha (Staphylococcus haemolyticus (strain JCSC1435)).